A 1064-amino-acid polypeptide reads, in one-letter code: Fibropellin-1 (1064 aa).

Positions 1–19 (MRTWLLAVLLLSVIAVTYG) are cleaved as a signal peptide. The EGF-like 1 domain occupies 20 to 55 (QGECDSDPCENGSTCQEGEGSYICQCPMGYDGQNCD). 4 cysteine pairs are disulfide-bonded: C23/C34, C28/C43, C45/C54, and C62/C88. An N-linked (GlcNAc...) asparagine glycan is attached at N30. Residues 62–175 (CGYNVFDANG…NRGFRITFSS (114 aa)) form the CUB domain. N-linked (GlcNAc...) asparagine glycosylation occurs at N136. The region spanning 176-212 (DGDDCDPNLCQNGAACTDLVNDYACTCPPGFTGRNCE) is the EGF-like 2; calcium-binding domain. Intrachain disulfides connect C180–C191, C185–C200, C202–C211, C218–C229, C223–C238, C240–C249, C256–C267, C261–C276, C278–C287, C294–C305, C299–C314, C316–C325, C332–C343, C337–C352, C354–C363, C370–C381, C375–C390, C392–C401, C408–C419, C413–C428, C430–C439, C446–C457, C451–C466, C468–C477, C484–C495, C489–C504, C506–C515, C522–C533, C527–C542, C544–C553, C560–C571, C565–C580, C582–C591, C598–C609, C603–C618, C620–C629, C636–C647, C641–C656, C658–C667, C674–C685, C679–C694, C696–C705, C712–C723, C717–C732, C734–C743, C750–C761, C755–C770, C772–C781, C788–C799, C793–C808, C810–C819, C826–C837, C831–C846, C848–C857, C864–C875, C869–C884, C886–C895, C902–C913, C907–C922, C924–C933, and C939–C1015. The EGF-like 3; calcium-binding domain occupies 214–250 (DIDECASDPCQNGGACVDGVNGYVCNCVPGFDGDECE). Positions 252–288 (NINECASSPCLNGGICVDGVNMFECTCLAGFTGVRCE) constitute an EGF-like 4; calcium-binding domain. The region spanning 290–326 (NIDECASAPCQNGGICIDGINGYTCSCPLGFSGDNCE) is the EGF-like 5; calcium-binding domain. The EGF-like 6; calcium-binding domain maps to 328-364 (NDDECSSIPCLNGGTCVDLVNAYMCVCAPGWTGPTCA). The 37-residue stretch at 366–402 (NIDECASAPCQNGGVCIDGVNGYMCDCQPGYTGTHCE) folds into the EGF-like 7; calcium-binding domain. Positions 404–440 (DIDECARPPCQNGGDCVDGVNGYVCICAPGFDGLNCE) constitute an EGF-like 8; calcium-binding domain. Residues 442–478 (NIDECASRPCQNGAVCVDGVNGFVCTCSAGYTGVLCE) form the EGF-like 9; calcium-binding domain. Residues 480 to 516 (DINECASMPCLNGGVCTDLVNGYICTCAAGFEGTNCE) form the EGF-like 10; calcium-binding domain. The 37-residue stretch at 518–554 (DTDECASFPCQNGATCTDQVNGYVCTCVPGYTGVLCE) folds into the EGF-like 11; calcium-binding domain. In terms of domain architecture, EGF-like 12; calcium-binding spans 556 to 592 (DINECASFPCLNGGTCNDQVNGYVCVCAQDTSVSTCE). Residues 594–630 (DRDECASAPCLNGGACMDVVNGFVCTCLPGWEGTNCE) form the EGF-like 13; calcium-binding domain. One can recognise an EGF-like 14; calcium-binding domain in the interval 632 to 668 (NTDECASSPCMNGGLCVDQVNSYVCFCLPGFTGIHCG). The 37-residue stretch at 670-706 (EIDECASSPCLNGGQCIDRVDSYECVCAAGYTAVRCQ) folds into the EGF-like 15; calcium-binding domain. Residues 708–744 (NIDECASAPCQNGGVCVDGVNGYVCNCAPGYTGDNCE) form the EGF-like 16; calcium-binding domain. Residues 746–782 (EIDECASMPCLNGGACIEMVNGYTCQCVAGYTGVICE) enclose the EGF-like 17; calcium-binding domain. The EGF-like 18; calcium-binding domain occupies 784 to 820 (DIDECASAPCQNGGVCTDTINGYICACVPGFTGSNCE). The EGF-like 19; calcium-binding domain occupies 822 to 858 (NIDECASDPCLNGGICVDGVNGFVCQCPPNYSGTYCE). N851 carries N-linked (GlcNAc...) asparagine glycosylation. Residues 860-896 (SLDACRSMPCQNGATCVNVGADYVCECVPGYAGQNCE) form the EGF-like 20 domain. The EGF-like 21; calcium-binding domain occupies 898 to 934 (DINECASLPCQNGGLCIDGIAGYTCQCRLGYIGVNCE). Residues 937-1056 (GFCDLEGMWY…GQDKWTRYEQ (120 aa)) form the Avidin-like domain.

In terms of assembly, homotetramer.

It localises to the secreted. It is found in the extracellular space. The protein localises to the cytoplasmic vesicle. The protein resides in the extracellular matrix. Its subcellular location is the hyaline layer. It localises to the apical lamina. Forms the apical lamina, a component of the extracellular matrix. The polypeptide is Fibropellin-1 (EGF1) (Strongylocentrotus purpuratus (Purple sea urchin)).